A 145-amino-acid polypeptide reads, in one-letter code: MVKVPVVRVNEKAILPHYATFQAAGMDLAACLDEPVTLAPFSTALIPTGLAIELPPGYEAQLRPRSGLALKHMISLPNAPATIDADYRGEVMVILVNYGKTPFIVCHGDRIAQMVVARYEHVRLEEVKALSETDRGDGGFGHTGV.

Residues 65–67 (RSG), asparagine 78, 82–84 (TID), and methionine 92 each bind substrate.

It belongs to the dUTPase family. Mg(2+) is required as a cofactor.

The catalysed reaction is dUTP + H2O = dUMP + diphosphate + H(+). It participates in pyrimidine metabolism; dUMP biosynthesis; dUMP from dCTP (dUTP route): step 2/2. In terms of biological role, this enzyme is involved in nucleotide metabolism: it produces dUMP, the immediate precursor of thymidine nucleotides and it decreases the intracellular concentration of dUTP so that uracil cannot be incorporated into DNA. The sequence is that of Deoxyuridine 5'-triphosphate nucleotidohydrolase from Chlorobium phaeobacteroides (strain BS1).